A 320-amino-acid polypeptide reads, in one-letter code: Malate dehydrogenase (320 aa).

Residues 10–15 and aspartate 34 contribute to the NAD(+) site; that span reads GAGQIG. Substrate is bound by residues arginine 83 and arginine 89. Residues asparagine 96 and 119–121 each bind NAD(+); that span reads ITN. Residues asparagine 121 and arginine 152 each coordinate substrate. Catalysis depends on histidine 176, which acts as the Proton acceptor.

It belongs to the LDH/MDH superfamily. MDH type 3 family.

It carries out the reaction (S)-malate + NAD(+) = oxaloacetate + NADH + H(+). Catalyzes the reversible oxidation of malate to oxaloacetate. The protein is Malate dehydrogenase of Dinoroseobacter shibae (strain DSM 16493 / NCIMB 14021 / DFL 12).